A 144-amino-acid polypeptide reads, in one-letter code: Large ribosomal subunit protein uL16 (144 aa).

The protein belongs to the universal ribosomal protein uL16 family. As to quaternary structure, part of the 50S ribosomal subunit.

In terms of biological role, binds 23S rRNA and is also seen to make contacts with the A and possibly P site tRNAs. This is Large ribosomal subunit protein uL16 from Acidobacterium capsulatum (strain ATCC 51196 / DSM 11244 / BCRC 80197 / JCM 7670 / NBRC 15755 / NCIMB 13165 / 161).